The chain runs to 89 residues: UPF0297 protein SUB1776 (89 aa).

This sequence belongs to the UPF0297 family.

In Streptococcus uberis (strain ATCC BAA-854 / 0140J), this protein is UPF0297 protein SUB1776.